The following is a 213-amino-acid chain: DNA-directed RNA polymerase subunit alpha (213 aa).

The protein belongs to the RNA polymerase alpha chain family. In terms of assembly, in plastids the minimal PEP RNA polymerase catalytic core is composed of four subunits: alpha, beta, beta', and beta''. When a (nuclear-encoded) sigma factor is associated with the core the holoenzyme is formed, which can initiate transcription.

The protein resides in the plastid. The protein localises to the chloroplast. It catalyses the reaction RNA(n) + a ribonucleoside 5'-triphosphate = RNA(n+1) + diphosphate. In terms of biological role, DNA-dependent RNA polymerase catalyzes the transcription of DNA into RNA using the four ribonucleoside triphosphates as substrates. In Euglena stellata, this protein is DNA-directed RNA polymerase subunit alpha (rpoA).